The chain runs to 418 residues: Tyrosine--tRNA ligase (418 aa).

Y34 provides a ligand contact to L-tyrosine. The 'HIGH' region signature appears at 39-48; it reads PTADSLHLGH. Y169 and Q173 together coordinate L-tyrosine. A 'KMSKS' region motif is present at residues 229–233; the sequence is KFGKS. Position 232 (K232) interacts with ATP. An S4 RNA-binding domain is found at 352–418; the sequence is LNLVDMLVTA…GKKKYAVLTY (67 aa).

This sequence belongs to the class-I aminoacyl-tRNA synthetase family. TyrS type 1 subfamily. In terms of assembly, homodimer.

It is found in the cytoplasm. It carries out the reaction tRNA(Tyr) + L-tyrosine + ATP = L-tyrosyl-tRNA(Tyr) + AMP + diphosphate + H(+). Its function is as follows. Catalyzes the attachment of tyrosine to tRNA(Tyr) in a two-step reaction: tyrosine is first activated by ATP to form Tyr-AMP and then transferred to the acceptor end of tRNA(Tyr). This Streptococcus pyogenes serotype M3 (strain SSI-1) protein is Tyrosine--tRNA ligase.